A 252-amino-acid chain; its full sequence is Type II secretion system protein N (252 aa).

At 1 to 4 the chain is on the cytoplasmic side; the sequence is MKRA. The helical transmembrane segment at 5–25 threads the bilayer; that stretch reads VGYGLLFSTVLMTSVVVHLPA. Residues 26–252 are Periplasmic-facing; that stretch reads QVALSPLPLP…RYPFNQQGQL (227 aa).

This sequence belongs to the GSP N family.

The protein resides in the cell inner membrane. Its function is as follows. Involved in a type II secretion system (T2SS, formerly general secretion pathway, GSP) for the export of proteins. Required for secretion of cholera toxin through the outer membrane. The protein is Type II secretion system protein N (epsN) of Vibrio cholerae serotype O1 (strain ATCC 39315 / El Tor Inaba N16961).